A 125-amino-acid chain; its full sequence is Desulfoferrodoxin (125 aa).

The Fe cation site is built by His49, His69, His75, Cys115, and His118.

It belongs to the desulfoferrodoxin family. It depends on Cu(2+) as a cofactor.

The catalysed reaction is reduced [rubredoxin] + superoxide + 2 H(+) = oxidized [rubredoxin] + H2O2. Its function is as follows. Catalyzes the reduction of superoxide to hydrogen peroxide, using electrons from NADH and NADH:rubredoxin oxidoreductase (NROR) and rubredoxin (Rd) as electron transport intermediaries between NADH and Dfx. Is a key factor in the superoxide reductase dependent part of a pathway for detoxification of reactive oxygen species (ROS) in C.acetobutylicum, an obligate anaerobic bacterium. The chain is Desulfoferrodoxin (dfx) from Clostridium acetobutylicum (strain ATCC 824 / DSM 792 / JCM 1419 / IAM 19013 / LMG 5710 / NBRC 13948 / NRRL B-527 / VKM B-1787 / 2291 / W).